The primary structure comprises 845 residues: Putative DEAD-box ATP-dependent RNA helicase 33 (845 aa).

Disordered regions lie at residues 129–149 and 282–302; these read GHPD…PMSP and KFRK…NEGK. Positions 289–298 are enriched in acidic residues; sequence STEEDSDEEG. Residues 375–403 carry the Q motif motif; the sequence is KRFDESCISPLTLKALSASGIVKMTRVQD. One can recognise a Helicase ATP-binding domain in the interval 406–590; it reads LSECLDGKDA…QLVLKRDHSY (185 aa). 419–426 lines the ATP pocket; it reads AKTGTGKS. The DEAD box signature appears at 538–541; sequence DEAD. The 155-residue stretch at 624 to 778 folds into the Helicase C-terminal domain; that stretch reads LLKEHINNMP…QVDQSMAKID (155 aa).

This sequence belongs to the DEAD box helicase family.

It catalyses the reaction ATP + H2O = ADP + phosphate + H(+). In Arabidopsis thaliana (Mouse-ear cress), this protein is Putative DEAD-box ATP-dependent RNA helicase 33 (RH33).